The chain runs to 244 residues: tRNA (guanine-N(1)-)-methyltransferase (244 aa).

S-adenosyl-L-methionine is bound by residues glycine 112 and 132-137 (IGDYIL).

Belongs to the RNA methyltransferase TrmD family. In terms of assembly, homodimer.

The protein localises to the cytoplasm. It catalyses the reaction guanosine(37) in tRNA + S-adenosyl-L-methionine = N(1)-methylguanosine(37) in tRNA + S-adenosyl-L-homocysteine + H(+). Functionally, specifically methylates guanosine-37 in various tRNAs. The protein is tRNA (guanine-N(1)-)-methyltransferase of Geobacillus kaustophilus (strain HTA426).